Here is a 377-residue protein sequence, read N- to C-terminus: MSNGIVIIGSGFAARQLVKNIRKQDACIPLTLIAADSMDEYNKPDLSHVISQRQRADDLTRQTAGEFAEQFNLHLFPHTWIMDIDAEAHVVKSQNNQWQYDKLVLATGASAFVPPVPGRELMLTLNSQQEYRACETQLRDARRVLIVGGGLIGSELAMDFCRAGKAVTLIDNAASILASLMPPEVSSRLQHRLTEMGVHLLLKSQLQGLEKTDSGILATLDRQRSIEVDAVIAATGLRPETALARRAGLTINRGVCVDSYLQTSNADIYALGDCTEINGQVLPFLQPIQLSAMVLAKNLLGNNTPLKLPAMLVKIKTPELPLHLAGETQRQDLRWQINTERQGMVARGVDDADQLRAFVVSEDRMKEAFGLLKTLPV.

The protein belongs to the FAD-dependent oxidoreductase family. It depends on FAD as a cofactor.

The protein resides in the cytoplasm. The enzyme catalyses 2 reduced [nitric oxide reductase rubredoxin domain] + NAD(+) + H(+) = 2 oxidized [nitric oxide reductase rubredoxin domain] + NADH. It participates in nitrogen metabolism; nitric oxide reduction. Functionally, one of at least two accessory proteins for anaerobic nitric oxide (NO) reductase. Reduces the rubredoxin moiety of NO reductase. The chain is Nitric oxide reductase FlRd-NAD(+) reductase from Escherichia coli O17:K52:H18 (strain UMN026 / ExPEC).